The primary structure comprises 469 residues: Acetyl-CoA decarbonylase/synthase complex subunit beta 1 (469 aa).

Positions 189, 192, 278, and 280 each coordinate [Ni-Fe-S] cluster.

This sequence belongs to the CdhC family. As to quaternary structure, monomer. The ACDS complex is made up of alpha, epsilon, beta, gamma and delta chains with a probable stoichiometry of (alpha(2)epsilon(2))(4)-beta(8)-(gamma(1)delta(1))(8) (Potential). Requires [Ni-Fe-S] cluster as cofactor.

It catalyses the reaction Co(I)-[corrinoid Fe-S protein] + acetyl-CoA + H(+) = methyl-Co(III)-[corrinoid Fe-S protein] + CO + CoA. The protein operates within one-carbon metabolism; methanogenesis from acetate. In terms of biological role, part of a complex that catalyzes the reversible cleavage of acetyl-CoA, allowing growth on acetate as sole source of carbon and energy. The alpha-epsilon complex generates CO from CO(2), while the beta subunit (this protein) combines the CO with CoA and a methyl group to form acetyl-CoA. The methyl group, which is incorporated into acetyl-CoA, is transferred to the beta subunit by a corrinoid iron-sulfur protein (the gamma-delta complex). This is Acetyl-CoA decarbonylase/synthase complex subunit beta 1 (cdhC1) from Methanosarcina thermophila.